The following is a 616-amino-acid chain: Chaperone protein DnaK (616 aa).

T175 carries the post-translational modification Phosphothreonine; by autocatalysis. The tract at residues 579 to 605 (GGDPSQAGGFDPNAAGGAQQAPHDDNV) is disordered.

Belongs to the heat shock protein 70 family.

Its function is as follows. Acts as a chaperone. The protein is Chaperone protein DnaK of Clostridium botulinum (strain Alaska E43 / Type E3).